The primary structure comprises 298 residues: ATP phosphoribosyltransferase (298 aa).

The protein belongs to the ATP phosphoribosyltransferase family. Long subfamily. The cofactor is Mg(2+).

The protein localises to the cytoplasm. It catalyses the reaction 1-(5-phospho-beta-D-ribosyl)-ATP + diphosphate = 5-phospho-alpha-D-ribose 1-diphosphate + ATP. It participates in amino-acid biosynthesis; L-histidine biosynthesis; L-histidine from 5-phospho-alpha-D-ribose 1-diphosphate: step 1/9. Its activity is regulated as follows. Feedback inhibited by histidine. Functionally, catalyzes the condensation of ATP and 5-phosphoribose 1-diphosphate to form N'-(5'-phosphoribosyl)-ATP (PR-ATP). Has a crucial role in the pathway because the rate of histidine biosynthesis seems to be controlled primarily by regulation of HisG enzymatic activity. This Tolumonas auensis (strain DSM 9187 / NBRC 110442 / TA 4) protein is ATP phosphoribosyltransferase.